A 323-amino-acid chain; its full sequence is tRNA dimethylallyltransferase (323 aa).

13-20 (GPTASGKT) is a binding site for ATP. A substrate-binding site is contributed by 15-20 (TASGKT). 4 interaction with substrate tRNA regions span residues 42 to 45 (DSAL), 166 to 170 (QRIQR), 251 to 256 (RCVGYR), and 284 to 291 (KRQITWLR).

Belongs to the IPP transferase family. Monomer. Mg(2+) serves as cofactor.

The enzyme catalyses adenosine(37) in tRNA + dimethylallyl diphosphate = N(6)-dimethylallyladenosine(37) in tRNA + diphosphate. In terms of biological role, catalyzes the transfer of a dimethylallyl group onto the adenine at position 37 in tRNAs that read codons beginning with uridine, leading to the formation of N6-(dimethylallyl)adenosine (i(6)A). The sequence is that of tRNA dimethylallyltransferase from Acidovorax ebreus (strain TPSY) (Diaphorobacter sp. (strain TPSY)).